Here is a 291-residue protein sequence, read N- to C-terminus: Pyridoxal 5'-phosphate synthase subunit PdxS (291 aa).

A D-ribose 5-phosphate-binding site is contributed by Asp-23. Catalysis depends on Lys-80, which acts as the Schiff-base intermediate with D-ribose 5-phosphate. Gly-152 serves as a coordination point for D-ribose 5-phosphate. D-glyceraldehyde 3-phosphate is bound at residue Arg-164. Residues Gly-213 and 234–235 each bind D-ribose 5-phosphate; that span reads GS.

It belongs to the PdxS/SNZ family. In terms of assembly, in the presence of PdxT, forms a dodecamer of heterodimers.

It carries out the reaction aldehydo-D-ribose 5-phosphate + D-glyceraldehyde 3-phosphate + L-glutamine = pyridoxal 5'-phosphate + L-glutamate + phosphate + 3 H2O + H(+). Its pathway is cofactor biosynthesis; pyridoxal 5'-phosphate biosynthesis. Catalyzes the formation of pyridoxal 5'-phosphate from ribose 5-phosphate (RBP), glyceraldehyde 3-phosphate (G3P) and ammonia. The ammonia is provided by the PdxT subunit. Can also use ribulose 5-phosphate and dihydroxyacetone phosphate as substrates, resulting from enzyme-catalyzed isomerization of RBP and G3P, respectively. The chain is Pyridoxal 5'-phosphate synthase subunit PdxS from Clostridium acetobutylicum (strain ATCC 824 / DSM 792 / JCM 1419 / IAM 19013 / LMG 5710 / NBRC 13948 / NRRL B-527 / VKM B-1787 / 2291 / W).